The chain runs to 2476 residues: Non-reducing polyketide synthase ausA (2476 aa).

The tract at residues 14-253 (VLFGPKYPEV…HHSNHTQAVE (240 aa)) is N-terminal acylcarrier protein transacylase domain (SAT). Residues 379–795 (AVPIAVTGMA…GSNAAIVLRE (417 aa)) form the Ketosynthase family 3 (KS3) domain. Residues Cys544, His679, and His718 each act as for beta-ketoacyl synthase activity in the active site. A malonyl-CoA:ACP transacylase (MAT) domain region spans residues 906–1210 (ICFGGQTGDT…LPTDLSGAQA (305 aa)). Residue Ser993 is the For acyl/malonyl transferase activity of the active site. Residues 1277–1405 (QEASLVRLLR…GRVSLQAAGS (129 aa)) form an N-terminal hotdog fold region. In terms of domain architecture, PKS/mFAS DH spans 1277–1584 (QEASLVRLLR…FTGVSIQSLK (308 aa)). Positions 1280–1583 (SLVRLLRQDG…TFTGVSIQSL (304 aa)) are product template (PT) domain. Catalysis depends on His1310, which acts as the Proton acceptor; for dehydratase activity. The segment at 1433 to 1584 (SSSGLKRSTV…FTGVSIQSLK (152 aa)) is C-terminal hotdog fold. Asp1491 serves as the catalytic Proton donor; for dehydratase activity. The Carrier domain occupies 1626–1700 (DGDLLAVQTM…GLVQRIFPGH (75 aa)). O-(pantetheine 4'-phosphoryl)serine is present on Ser1660. Residues 1862–2095 (QHASEHKLLH…GFNWVDWTDN (234 aa)) are methyltransferase (CMeT) domain. The thioesterase (TE) domain stretch occupies residues 2128–2476 (NTVQEQTVLY…YEFLRRHVGL (349 aa)). Residues Ser2251, Asp2413, and His2445 each act as for thioesterase activity in the active site.

It carries out the reaction 3 malonyl-CoA + acetyl-CoA + 2 S-adenosyl-L-methionine = 3,5-dimethylorsellinate + 2 S-adenosyl-L-homocysteine + 3 CO2 + 4 CoA. It functions in the pathway secondary metabolite biosynthesis; terpenoid biosynthesis. In terms of biological role, non-reducing polyketide synthase; part of the gene cluster A that mediates the biosynthesis of austinol and dehydroaustinol, two fungal meroterpenoids. The first step of the pathway is the synthesis of 3,5-dimethylorsellinic acid by the polyketide synthase ausA. 3,5-dimethylorsellinic acid is then prenylated by the polyprenyl transferase ausN. Further epoxidation by the FAD-dependent monooxygenase ausM and cyclization by the probable terpene cyclase ausL lead to the formation of protoaustinoid A. Protoaustinoid A is then oxidized to spiro-lactone preaustinoid A3 by the combined action of the FAD-binding monooxygenases ausB and ausC, and the dioxygenase ausE. Acid-catalyzed keto-rearrangement and ring contraction of the tetraketide portion of preaustinoid A3 by ausJ lead to the formation of preaustinoid A4. The aldo-keto reductase ausK, with the help of ausH, is involved in the next step by transforming preaustinoid A4 into isoaustinone which is in turn hydroxylated by the P450 monooxygenase ausI to form austinolide. Finally, the cytochrome P450 monooxygenase ausG modifies austinolide to austinol. Austinol can be further modified to dehydroaustinol which forms a diffusible complex with diorcinol that initiates conidiation. Due to genetic rearrangements of the clusters and the subsequent loss of some enzymes, the end products of the Emericella nidulans austinoid biosynthesis clusters are austinol and dehydroaustinol, even if additional enzymes, such as the O-acetyltransferase ausQ and the cytochrome P450 monooxygenase ausR are still functional. The protein is Non-reducing polyketide synthase ausA of Emericella nidulans (strain FGSC A4 / ATCC 38163 / CBS 112.46 / NRRL 194 / M139) (Aspergillus nidulans).